A 414-amino-acid polypeptide reads, in one-letter code: Seminal vesicle secretory protein 2 (414 aa).

Positions 1–22 (MKSSVFILSLFLLLERQAAVVG) are cleaved as a signal peptide. Gln23 carries the post-translational modification Pyrrolidone carboxylic acid. 13 repeat units span residues 108 to 120 (ESQI…VKSS), 127 to 139 (GSQL…VKSS), 140 to 152 (ESQL…VKAS), 153 to 165 (GSQL…VKAS), 166 to 178 (GSQL…MKSS), 179 to 191 (GSQV…MKSS), 192 to 204 (GSQV…MKAS), 205 to 217 (ESQI…RKSQ), 224 to 236 (YGQM…TKSL), 237 to 249 (ESQA…VKSQ), 257 to 269 (YGQR…ETQL), 275 to 287 (DAQL…QKSQ), and 299 to 311 (SAQL…QKSL). A 13 X 13 AA tandem repeats region spans residues 108-311 (ESQIKSFRQV…LKSFGQQKSL (204 aa)). 3 disordered regions span residues 170–228 (KSYG…GQMK), 240–294 (AKSF…SFSQ), and 306–369 (GQQK…FGQE). The segment covering 240 to 259 (AKSFGQVKSQSGQMKSSYGQ) has biased composition (polar residues). Low complexity predominate over residues 277–294 (QLKSYGQQKSQKQSSFSQ). Composition is skewed to polar residues over residues 306–321 (GQQK…TQQK) and 342–351 (SVQQKSTQQM). Positions 358–369 (SQFGQQRQFGQE) are enriched in low complexity.

The repeating unit appears to be involved in the formation of the copulatory plug via a transglutaminase reaction cross-linking glutamine and lysine residues.

The rat seminal vesicle contains six major androgen-dependent secretory proteins referred to as SVS I-VI. The SVS I-III proteins appear to be components of the rat copulatory plug, with the SVS II protein being the major component. The sequence is that of Seminal vesicle secretory protein 2 (Svs2) from Rattus norvegicus (Rat).